The chain runs to 329 residues: tRNA (cytidine(32)/guanosine(34)-2'-O)-methyltransferase (329 aa).

S-adenosyl-L-methionine contacts are provided by Gly-53, Trp-55, Asp-75, Asp-91, and Asp-116. Lys-156 serves as the catalytic Proton acceptor. A required for binding to WDR6 region spans residues 221–240; it reads DFNQLDGPTRIIVPFVTCGD. Ser-271 carries the post-translational modification Phosphoserine.

This sequence belongs to the class I-like SAM-binding methyltransferase superfamily. RNA methyltransferase RlmE family. TRM7 subfamily. In terms of assembly, interacts with WDR6; the interaction is direct, and required for 2'-O-methylation of position 34 in substrate tRNAs. Found in fetal brain, lung, liver and kidney. Widely expressed in adult tissue; with high expression in heart and liver, lower expression in skeletal muscle, kidney, and pancreas and also lowly expressed in brain and lung. In the adult brain, expressed in amygdala, caudate nucleus, corpus callosum, hippocampus and thalamus.

Its subcellular location is the cytoplasm. The protein localises to the nucleus. It carries out the reaction cytidine(32)/guanosine(34) in tRNA + 2 S-adenosyl-L-methionine = 2'-O-methylcytidine(32)/2'-O-methylguanosine(34) in tRNA + 2 S-adenosyl-L-homocysteine + 2 H(+). Its activity is regulated as follows. Inhibited by 2,6-diaminopurine (DAP); inhibition promotes UGA stop-codon readthrough during translation by misincorporation of tRNA(Trp) in the nascent polypeptide. Methylates the 2'-O-ribose of nucleotides at positions 32 and 34 of the tRNA anticodon loop of substrate tRNAs. Requisite for faithful cytoplasmic translation. Requires THADA for methylation of the nucleotide at position 32 of the anticodon loop of substrate tRNAs. Requires WDR6 for methylation of the nucleotide at position 34 of the anticodon loop of substrate tRNAs. Promotes translation efficiency of the UUU codon. Plays a role in neurogenesis. Required for expression of genes involved in neurogenesis, mitochondrial translation and energy generation, and lipid biosynthesis. Requisite for RNA-mediated gene silencing. May modify position 32 in tRNA(Arg(ACG)), tRNA(Arg(CCG)), tRNA(Arg(UCG)), tRNA(Cys(GCA)), tRNA(Cys(ACA)), tRNA(Gln(CUG)), tRNA(Gln(UUG)), tRNA(Gly(CCC)), tRNA(Leu(CAG))/tRNA(Leu(CAA)), tRNA(Leu(A/IAG)), tRNA(Leu(UAG)), tRNA(Phe(GAA)), tRNA(Pro(AGG))/tRNA(Pro(CGG))/tRNA(Pro(UGG)) and tRNA(Trp(CCA)), and position 34 in tRNA(Phe(GAA)), tRNA(Leu(CAA)), tRNA(Sec(UCA)), and tRNA(Trp(CCA)). This chain is tRNA (cytidine(32)/guanosine(34)-2'-O)-methyltransferase, found in Homo sapiens (Human).